The sequence spans 316 residues: ATP synthase gamma chain (316 aa).

The protein belongs to the ATPase gamma chain family. F-type ATPases have 2 components, CF(1) - the catalytic core - and CF(0) - the membrane proton channel. CF(1) has five subunits: alpha(3), beta(3), gamma(1), delta(1), epsilon(1). CF(0) has three main subunits: a, b and c.

The protein localises to the cellular thylakoid membrane. In terms of biological role, produces ATP from ADP in the presence of a proton gradient across the membrane. The gamma chain is believed to be important in regulating ATPase activity and the flow of protons through the CF(0) complex. The polypeptide is ATP synthase gamma chain (Prochlorococcus marinus (strain MIT 9301)).